Here is a 283-residue protein sequence, read N- to C-terminus: 4-diphosphocytidyl-2-C-methyl-D-erythritol kinase (283 aa).

Lys10 is an active-site residue. 99–109 (PMGGGLGGGSS) provides a ligand contact to ATP. Residue Asp141 is part of the active site.

The protein belongs to the GHMP kinase family. IspE subfamily. As to quaternary structure, homodimer.

The enzyme catalyses 4-CDP-2-C-methyl-D-erythritol + ATP = 4-CDP-2-C-methyl-D-erythritol 2-phosphate + ADP + H(+). It functions in the pathway isoprenoid biosynthesis; isopentenyl diphosphate biosynthesis via DXP pathway; isopentenyl diphosphate from 1-deoxy-D-xylulose 5-phosphate: step 3/6. Its function is as follows. Catalyzes the phosphorylation of the position 2 hydroxy group of 4-diphosphocytidyl-2C-methyl-D-erythritol. This Salmonella paratyphi C (strain RKS4594) protein is 4-diphosphocytidyl-2-C-methyl-D-erythritol kinase.